The primary structure comprises 152 residues: UPF0225 protein KPK_2103 (152 aa).

This sequence belongs to the UPF0225 family.

This chain is UPF0225 protein KPK_2103, found in Klebsiella pneumoniae (strain 342).